Here is a 660-residue protein sequence, read N- to C-terminus: DNA mismatch repair protein MutL (660 aa).

Over residues Ser-341 to Ser-355 the composition is skewed to polar residues. Disordered stretches follow at residues Ser-341–Glu-362 and Ala-378–Arg-398. The span at Glu-385–Arg-398 shows a compositional bias: basic and acidic residues.

Belongs to the DNA mismatch repair MutL/HexB family.

In terms of biological role, this protein is involved in the repair of mismatches in DNA. It is required for dam-dependent methyl-directed DNA mismatch repair. May act as a 'molecular matchmaker', a protein that promotes the formation of a stable complex between two or more DNA-binding proteins in an ATP-dependent manner without itself being part of a final effector complex. The chain is DNA mismatch repair protein MutL from Heliobacterium modesticaldum (strain ATCC 51547 / Ice1).